A 242-amino-acid polypeptide reads, in one-letter code: Probable transcriptional regulatory protein Bamb_2332 (242 aa).

Belongs to the TACO1 family.

It localises to the cytoplasm. This is Probable transcriptional regulatory protein Bamb_2332 from Burkholderia ambifaria (strain ATCC BAA-244 / DSM 16087 / CCUG 44356 / LMG 19182 / AMMD) (Burkholderia cepacia (strain AMMD)).